Here is a 506-residue protein sequence, read N- to C-terminus: RNA-splicing ligase RtcB homolog (506 aa).

Positions 120, 123, 228, 260, and 354 each coordinate Mn(2+). 227–231 (NHYAE) contributes to the GMP binding site. GMP is bound by residues 354 to 355 (HN), 403 to 406 (GGSM), serine 410, 429 to 432 (HGAG), and lysine 505. The GMP-histidine intermediate role is filled by histidine 429.

The protein belongs to the RtcB family. Catalytic component of the tRNA-splicing ligase complex. Mn(2+) serves as cofactor.

The enzyme catalyses a 3'-end 3'-phospho-ribonucleotide-RNA + a 5'-end dephospho-ribonucleoside-RNA + GTP = a ribonucleotidyl-ribonucleotide-RNA + GMP + diphosphate. It catalyses the reaction a 3'-end 2',3'-cyclophospho-ribonucleotide-RNA + a 5'-end dephospho-ribonucleoside-RNA + GTP + H2O = a ribonucleotidyl-ribonucleotide-RNA + GMP + diphosphate + H(+). Its function is as follows. Catalytic subunit of the tRNA-splicing ligase complex that acts by directly joining spliced tRNA halves to mature-sized tRNAs by incorporating the precursor-derived splice junction phosphate into the mature tRNA as a canonical 3',5'-phosphodiester. May act as an RNA ligase with broad substrate specificity, and may function toward other RNAs. This is RNA-splicing ligase RtcB homolog from Aedes aegypti (Yellowfever mosquito).